The following is a 251-amino-acid chain: Phosphate import ATP-binding protein PstB 2 (251 aa).

Residues 5 to 246 (ISAKDVHLSY…PKKQITSDYL (242 aa)) enclose the ABC transporter domain. Position 37–44 (37–44 (GPSGCGKS)) interacts with ATP.

This sequence belongs to the ABC transporter superfamily. Phosphate importer (TC 3.A.1.7) family. As to quaternary structure, the complex is composed of two ATP-binding proteins (PstB), two transmembrane proteins (PstC and PstA) and a solute-binding protein (PstS).

The protein localises to the cell membrane. The catalysed reaction is phosphate(out) + ATP + H2O = ADP + 2 phosphate(in) + H(+). Its function is as follows. Part of the ABC transporter complex PstSACB involved in phosphate import. Responsible for energy coupling to the transport system. This Lactobacillus acidophilus (strain ATCC 700396 / NCK56 / N2 / NCFM) protein is Phosphate import ATP-binding protein PstB 2.